Here is a 187-residue protein sequence, read N- to C-terminus: GTP cyclohydrolase 1 (187 aa).

Zn(2+) is bound by residues cysteine 81, histidine 84, and cysteine 152.

This sequence belongs to the GTP cyclohydrolase I family. In terms of assembly, homomer.

It carries out the reaction GTP + H2O = 7,8-dihydroneopterin 3'-triphosphate + formate + H(+). The protein operates within cofactor biosynthesis; 7,8-dihydroneopterin triphosphate biosynthesis; 7,8-dihydroneopterin triphosphate from GTP: step 1/1. This chain is GTP cyclohydrolase 1, found in Pyrobaculum neutrophilum (strain DSM 2338 / JCM 9278 / NBRC 100436 / V24Sta) (Thermoproteus neutrophilus).